A 242-amino-acid polypeptide reads, in one-letter code: MPWPSRKRDKGAVADKKEPDAKIAKTEEETEDKEEEEKSTKPPAGSSKSGLKNWKKAKESDSGGEESKITYCHWLLKSEPESRLEKGVDVKFSIEDLKAQPNQTTFWEGVRNYQARNFLRAMKLGQQAFFYHSNCKEPGIVGIVKIVKEAYPDHTQFDQKDPHYDSSSRKENPKWSMVDVQFVRMTKRFIPLSEIKTHHLAHKADGGPLKNMMLFSRQRLSIQPLTQEEFDFVLSLEEEKPH.

The disordered stretch occupies residues 1–64 (MPWPSRKRDK…KKAKESDSGG (64 aa)). The Nuclear localization signal motif lies at 6–10 (RKRDK). Basic and acidic residues predominate over residues 10-27 (KGAVADKKEPDAKIAKTE). Residues 28-37 (EETEDKEEEE) are compositionally biased toward acidic residues.

Post-translationally, undergoes proteolytic processing during lymphocyte apoptosis. In terms of processing, phosphorylated. Expressed at high levels in bursa of fabricus, thymus and spleen. Also found in the liver, intestine, heart and brain.

It localises to the nucleus. In terms of biological role, specifically binds 5-hydroxymethylcytosine (5hmC), suggesting that it acts as a specific reader of 5hmC. The protein is Thymocyte nuclear protein 1 (THYN1) of Gallus gallus (Chicken).